The sequence spans 1171 residues: ATP-dependent helicase/deoxyribonuclease subunit B (1171 aa).

Positions 1-390 (MSLRFVIGRA…HPLVECIRSA (390 aa)) constitute a UvrD-like helicase ATP-binding domain. An ATP-binding site is contributed by 8–15 (GRAGSGKS). The region spanning 281 to 587 (MEQPRFHSPA…QFANIPPSLD (307 aa)) is the UvrD-like helicase C-terminal domain. C805, C1129, C1132, and C1138 together coordinate [4Fe-4S] cluster.

This sequence belongs to the helicase family. AddB/RexB type 1 subfamily. Heterodimer of AddA and AddB. Mg(2+) serves as cofactor. It depends on [4Fe-4S] cluster as a cofactor.

In terms of biological role, the heterodimer acts as both an ATP-dependent DNA helicase and an ATP-dependent, dual-direction single-stranded exonuclease. Recognizes the chi site generating a DNA molecule suitable for the initiation of homologous recombination. The AddB subunit has 5' -&gt; 3' nuclease activity but not helicase activity. The chain is ATP-dependent helicase/deoxyribonuclease subunit B from Bacillus cereus (strain ATCC 14579 / DSM 31 / CCUG 7414 / JCM 2152 / NBRC 15305 / NCIMB 9373 / NCTC 2599 / NRRL B-3711).